Consider the following 1017-residue polypeptide: Probable DNA ligase (1017 aa).

The segment at 1-363 (MPWDVKFSHG…PACATPLHAP (363 aa)) is unknown. The segment at 326-352 (GIRSSPPQVRAGDATPSSRSSGDAGVA) is disordered. Positions 364 to 1017 (DSFARFVAAA…GARPPPAASD (654 aa)) are DNA ligase. Glutamate 667 serves as a coordination point for ATP. Lysine 669 (N6-AMP-lysine intermediate) is an active-site residue. 5 residues coordinate ATP: arginine 674, arginine 689, glutamate 717, arginine 860, and lysine 866.

In the C-terminal section; belongs to the ATP-dependent DNA ligase family. Mg(2+) serves as cofactor.

The catalysed reaction is ATP + (deoxyribonucleotide)n-3'-hydroxyl + 5'-phospho-(deoxyribonucleotide)m = (deoxyribonucleotide)n+m + AMP + diphosphate.. Functionally, DNA ligase that seals nicks in double-stranded DNA during DNA replication, DNA recombination and DNA repair. The polypeptide is Probable DNA ligase (lig) (Opitutus terrae (strain DSM 11246 / JCM 15787 / PB90-1)).